Consider the following 545-residue polypeptide: Membrane protein insertase YidC (545 aa).

A helical membrane pass occupies residues 6-26 (LILFSALVLVLFLMWDAWQTD). The segment at 34-59 (PPPPQPTASSGESSPVLPEAVPDAPP) is disordered. The next 3 membrane-spanning stretches (helical) occupy residues 357-377 (LVGN…LVFF), 428-448 (GGCL…WMLL), and 505-525 (PVMF…YWVV).

This sequence belongs to the OXA1/ALB3/YidC family. Type 1 subfamily. As to quaternary structure, interacts with the Sec translocase complex via SecD. Specifically interacts with transmembrane segments of nascent integral membrane proteins during membrane integration.

The protein resides in the cell inner membrane. Its function is as follows. Required for the insertion and/or proper folding and/or complex formation of integral membrane proteins into the membrane. Involved in integration of membrane proteins that insert both dependently and independently of the Sec translocase complex, as well as at least some lipoproteins. Aids folding of multispanning membrane proteins. The sequence is that of Membrane protein insertase YidC from Nitrosococcus oceani (strain ATCC 19707 / BCRC 17464 / JCM 30415 / NCIMB 11848 / C-107).